A 244-amino-acid polypeptide reads, in one-letter code: Ribosomal RNA large subunit methyltransferase E (244 aa).

The segment at 1-23 is disordered; that stretch reads MATGGKKSAGRTTGSGPAGGSRN. Gly-91, Trp-93, Asp-116, Asp-132, and Asp-156 together coordinate S-adenosyl-L-methionine. Lys-196 functions as the Proton acceptor in the catalytic mechanism.

This sequence belongs to the class I-like SAM-binding methyltransferase superfamily. RNA methyltransferase RlmE family.

The protein localises to the cytoplasm. It carries out the reaction uridine(2552) in 23S rRNA + S-adenosyl-L-methionine = 2'-O-methyluridine(2552) in 23S rRNA + S-adenosyl-L-homocysteine + H(+). Its function is as follows. Specifically methylates the uridine in position 2552 of 23S rRNA at the 2'-O position of the ribose in the fully assembled 50S ribosomal subunit. The polypeptide is Ribosomal RNA large subunit methyltransferase E (Paramagnetospirillum magneticum (strain ATCC 700264 / AMB-1) (Magnetospirillum magneticum)).